We begin with the raw amino-acid sequence, 199 residues long: Prefoldin subunit 3 (199 aa).

Met-1 is subject to N-acetylmethionine.

This sequence belongs to the prefoldin subunit alpha family. In terms of assembly, heterohexamer of two PFD-alpha type and four PFD-beta type subunits.

In terms of biological role, binds specifically to cytosolic chaperonin (c-CPN) and transfers target proteins to it. Binds to nascent polypeptide chain and promotes folding in an environment in which there are many competing pathways for nonnative proteins. In Saccharomyces cerevisiae (strain ATCC 204508 / S288c) (Baker's yeast), this protein is Prefoldin subunit 3 (PAC10).